We begin with the raw amino-acid sequence, 177 residues long: Basic form of pathogenesis-related protein 1 (177 aa).

Positions 1–23 are cleaved as a signal peptide; that stretch reads MGFLTTIVACFITFAILIHSSKA. Residue Q24 is modified to Pyrrolidone carboxylic acid. Residues 31–147 form the SCP domain; the sequence is LNPHNAARRQ…NGWFFITCNY (117 aa).

It belongs to the CRISP family. In terms of processing, two disulfide bonds are present.

Its function is as follows. Probably involved in the defense reaction of plants against pathogens. This chain is Basic form of pathogenesis-related protein 1, found in Nicotiana tabacum (Common tobacco).